The sequence spans 354 residues: Uroporphyrinogen decarboxylase (354 aa).

Substrate contacts are provided by residues 27-31 (RQAGR), F46, D77, Y154, T209, and H327.

The protein belongs to the uroporphyrinogen decarboxylase family. As to quaternary structure, homodimer.

The protein localises to the cytoplasm. The catalysed reaction is uroporphyrinogen III + 4 H(+) = coproporphyrinogen III + 4 CO2. It functions in the pathway porphyrin-containing compound metabolism; protoporphyrin-IX biosynthesis; coproporphyrinogen-III from 5-aminolevulinate: step 4/4. Catalyzes the decarboxylation of four acetate groups of uroporphyrinogen-III to yield coproporphyrinogen-III. In Photorhabdus laumondii subsp. laumondii (strain DSM 15139 / CIP 105565 / TT01) (Photorhabdus luminescens subsp. laumondii), this protein is Uroporphyrinogen decarboxylase.